The primary structure comprises 123 residues: Steroid Delta-isomerase (123 aa).

Catalysis depends on tyrosine 12, which acts as the Proton donor. The active-site Proton acceptor is the aspartate 36. Aspartate 96 lines the substrate pocket.

In terms of assembly, homodimer.

It carries out the reaction a 3-oxo-Delta(5)-steroid = a 3-oxo-Delta(4)-steroid. This chain is Steroid Delta-isomerase (ksdI), found in Nocardioides simplex (Arthrobacter simplex).